We begin with the raw amino-acid sequence, 504 residues long: MAGLKRRVPLHSLRYFISMVGLFSKPGLLPWYARNPPGWSQLFLGTVCKGDFTRVIATKCQKGQKSQKKPSHLGPLDGSWQERLADVVTPLWRLSYEEQLKVKFAAQKKILQRLESYIQMLNGVSVTTAVPKSERLSCLLHPIIPSPVINGYRNKSTFSVNRGPDGNPKTVGFYLGTWRDGNVVCVQSNHLKNIPEKHSQVAQYYEVFLRQSPLEPCLVFHEGGYWRELTVRTNSQGHTMAIITFHPQKLSQEELHVQKEIVKEFFIRGPGAACGLTSLYFQESTMTRCSHQQSPYQLLFGEPYIFEELLSLKIRISPDAFFQINTAGAEMLYRTVGELTGVNSDTILLDICCGTGVIGLSLAQHTSRVLGIELLEQAVEDARWTAAFNGITNSEFHTGQAEKILPGLLKSKEDGQSIVAVVNPARAGLHYKVIQAIRNFRAIHTLVFVSCKLHGESTRNVIELCCPPDPAKKLLGEPFVLQQAVPVDLFPHTPHCELVLLFTR.

The transit peptide at 1-16 (MAGLKRRVPLHSLRYF) directs the protein to the mitochondrion. Residues glutamine 323, glutamate 373, and asparagine 423 each coordinate S-adenosyl-L-methionine. The active-site Nucleophile is the cysteine 451. Residue glutamate 497 is the Proton acceptor of the active site.

It belongs to the class I-like SAM-binding methyltransferase superfamily. RNA M5U methyltransferase family.

The protein localises to the mitochondrion. Its subcellular location is the mitochondrion matrix. It catalyses the reaction uridine(54) in tRNA + S-adenosyl-L-methionine = 5-methyluridine(54) in tRNA + S-adenosyl-L-homocysteine + H(+). It carries out the reaction a uridine in 12S rRNA + S-adenosyl-L-methionine = a 5-methyluridine in 12S rRNA + S-adenosyl-L-homocysteine + H(+). Mitochondrial S-adenosyl-L-methionine-dependent methyltransferase that catalyzes the formation of 5-methyl-uridine in tRNAs and 12S rRNA. Catalyzes the methylation of uridine at position 54 (m5U54) in all tRNAs. Specifically methylates the uridine in position 429 of 12S rRNA (m5U429). Does not affect RNA stability or mitochondrial translation. The sequence is that of tRNA (uracil-5-)-methyltransferase homolog B from Homo sapiens (Human).